Consider the following 415-residue polypeptide: D-threonate kinase (415 aa).

Substrate contacts are provided by residues Asp-9, Arg-53, and 81–84 (KIDS). ATP contacts are provided by residues Ser-251, 345-348 (GGET), and Gly-392.

The protein belongs to the four-carbon acid sugar kinase family.

The catalysed reaction is D-threonate + ATP = 4-O-phospho-D-threonate + ADP + H(+). Catalyzes the ATP-dependent phosphorylation of D-threonate to D-threonate 4-phosphate. Can also phosphorylate 4-hydroxy-L-threonine, with lower efficiency. The protein is D-threonate kinase of Cupriavidus necator (strain ATCC 17699 / DSM 428 / KCTC 22496 / NCIMB 10442 / H16 / Stanier 337) (Ralstonia eutropha).